We begin with the raw amino-acid sequence, 222 residues long: Histidine biosynthesis bifunctional protein HisIE (222 aa).

A phosphoribosyl-AMP cyclohydrolase region spans residues 1–128; it reads MQPLSPAFID…SLTLPPPMDA (128 aa). A phosphoribosyl-ATP pyrophosphohydrolase region spans residues 129–222; the sequence is CSELFRVIDQ…ANRRGAPRRN (94 aa).

The protein in the N-terminal section; belongs to the PRA-CH family. This sequence in the C-terminal section; belongs to the PRA-PH family.

It is found in the cytoplasm. It catalyses the reaction 1-(5-phospho-beta-D-ribosyl)-ATP + H2O = 1-(5-phospho-beta-D-ribosyl)-5'-AMP + diphosphate + H(+). The enzyme catalyses 1-(5-phospho-beta-D-ribosyl)-5'-AMP + H2O = 1-(5-phospho-beta-D-ribosyl)-5-[(5-phospho-beta-D-ribosylamino)methylideneamino]imidazole-4-carboxamide. It functions in the pathway amino-acid biosynthesis; L-histidine biosynthesis; L-histidine from 5-phospho-alpha-D-ribose 1-diphosphate: step 2/9. The protein operates within amino-acid biosynthesis; L-histidine biosynthesis; L-histidine from 5-phospho-alpha-D-ribose 1-diphosphate: step 3/9. The protein is Histidine biosynthesis bifunctional protein HisIE of Prochlorococcus marinus (strain MIT 9313).